The sequence spans 461 residues: Deoxyhypusine synthase (461 aa).

Residues 166–167 (EH), Glu331, His377, 403–405 (GSD), and 412–418 (EAVSWGK) each bind spermidine. The active-site Nucleophile is Lys418. Residues 428-448 (VYSEVTIVFPLIVVHVFVAWV) traverse the membrane as a helical segment.

The protein belongs to the deoxyhypusine synthase family. In terms of assembly, heterotetramer formed by a homodimer of the non-catalytic regulatory subunit DHSp and a homodimer of the catalytic subunit DHSc where DHSc appears to bind spermidine and DHSp appears to bind NAD(+). The cofactor is NAD(+).

Its subcellular location is the membrane. It carries out the reaction [eIF5A protein]-L-lysine + spermidine = [eIF5A protein]-deoxyhypusine + propane-1,3-diamine. It functions in the pathway protein modification; eIF5A hypusination. Allosterically activated by DHSp. Inhibited by spermididine analog N1-guanyl-1,7-diamineoheptane (GC7). In terms of biological role, in association with the non-catalytic regulatory subunit DHSp, catalyzes the NAD-dependent oxidative cleavage of spermidine and the subsequent transfer of the butylamine moiety of spermidine to the epsilon-amino group of a specific lysine residue of the eIF5A precursor protein to form the intermediate deoxyhypusine residue. Regulates protein levels of its regulatory subunit DHSp. Required for cell growth and survival. The polypeptide is Deoxyhypusine synthase (Trypanosoma brucei brucei (strain 927/4 GUTat10.1)).